A 316-amino-acid chain; its full sequence is 4-hydroxy-3-methylbut-2-enyl diphosphate reductase (316 aa).

Cys-12 lines the [4Fe-4S] cluster pocket. (2E)-4-hydroxy-3-methylbut-2-enyl diphosphate is bound by residues His-41 and His-74. Residues His-41 and His-74 each contribute to the dimethylallyl diphosphate site. The isopentenyl diphosphate site is built by His-41 and His-74. Residue Cys-96 coordinates [4Fe-4S] cluster. Residue His-124 coordinates (2E)-4-hydroxy-3-methylbut-2-enyl diphosphate. His-124 provides a ligand contact to dimethylallyl diphosphate. Residue His-124 coordinates isopentenyl diphosphate. Glu-126 (proton donor) is an active-site residue. A (2E)-4-hydroxy-3-methylbut-2-enyl diphosphate-binding site is contributed by Thr-169. Position 199 (Cys-199) interacts with [4Fe-4S] cluster. The (2E)-4-hydroxy-3-methylbut-2-enyl diphosphate site is built by Ser-227, Ser-228, Asn-229, and Ser-271. The dimethylallyl diphosphate site is built by Ser-227, Ser-228, Asn-229, and Ser-271. Isopentenyl diphosphate contacts are provided by Ser-227, Ser-228, Asn-229, and Ser-271.

This sequence belongs to the IspH family. [4Fe-4S] cluster serves as cofactor.

The catalysed reaction is isopentenyl diphosphate + 2 oxidized [2Fe-2S]-[ferredoxin] + H2O = (2E)-4-hydroxy-3-methylbut-2-enyl diphosphate + 2 reduced [2Fe-2S]-[ferredoxin] + 2 H(+). It carries out the reaction dimethylallyl diphosphate + 2 oxidized [2Fe-2S]-[ferredoxin] + H2O = (2E)-4-hydroxy-3-methylbut-2-enyl diphosphate + 2 reduced [2Fe-2S]-[ferredoxin] + 2 H(+). The protein operates within isoprenoid biosynthesis; dimethylallyl diphosphate biosynthesis; dimethylallyl diphosphate from (2E)-4-hydroxy-3-methylbutenyl diphosphate: step 1/1. It functions in the pathway isoprenoid biosynthesis; isopentenyl diphosphate biosynthesis via DXP pathway; isopentenyl diphosphate from 1-deoxy-D-xylulose 5-phosphate: step 6/6. In terms of biological role, catalyzes the conversion of 1-hydroxy-2-methyl-2-(E)-butenyl 4-diphosphate (HMBPP) into a mixture of isopentenyl diphosphate (IPP) and dimethylallyl diphosphate (DMAPP). Acts in the terminal step of the DOXP/MEP pathway for isoprenoid precursor biosynthesis. The protein is 4-hydroxy-3-methylbut-2-enyl diphosphate reductase of Stenotrophomonas maltophilia (strain K279a).